A 107-amino-acid polypeptide reads, in one-letter code: Replication initiation control protein YabA (107 aa).

Zn(2+) contacts are provided by His-81, Cys-83, Cys-97, and Cys-100.

It belongs to the YabA family. In terms of assembly, homotetramer. Interacts with both DnaA and DnaN, acting as a bridge between these two proteins. It depends on Zn(2+) as a cofactor.

Its subcellular location is the cytoplasm. It localises to the nucleoid. In terms of biological role, involved in control of chromosome replication initiation. Inhibits the cooperative binding of DnaA to the oriC region, thus negatively regulating initiation of chromosome replication. Inhibits the ability of DnaA-ATP to form a helix on DNA; does not disassemble preformed DnaA-DNA helices. Decreases the residence time of DnaA on the chromosome at its binding sites (oriC, replication forks and promoter-binding sites). Tethers DnaA to the replication machinery via the DNA polymerase beta sliding clamp subunit (dnaN). Associates with oriC and other DnaA targets on the chromosome in a DnaA-dependent manner. The sequence is that of Replication initiation control protein YabA from Streptococcus pyogenes serotype M1.